The sequence spans 460 residues: GTPase Der (460 aa).

2 EngA-type G domains span residues 2-164 and 196-368; these read QSII…HEEF and IRVG…ENFT. Residues 8-15, 55-59, 116-119, 202-209, 249-253, and 313-316 contribute to the GTP site; these read GKPNVGKS, DSGGL, NKVD, GRVNVGKS, DTAGI, and NKWD. Residues 369–453 form the KH-like domain; it reads QKIQTSKLNT…PLVIASRKKG (85 aa).

This sequence belongs to the TRAFAC class TrmE-Era-EngA-EngB-Septin-like GTPase superfamily. EngA (Der) GTPase family. In terms of assembly, associates with the 50S ribosomal subunit.

Its function is as follows. GTPase that plays an essential role in the late steps of ribosome biogenesis. The polypeptide is GTPase Der (Campylobacter jejuni subsp. jejuni serotype O:23/36 (strain 81-176)).